Here is a 125-residue protein sequence, read N- to C-terminus: Somatostatin-2 (125 aa).

The N-terminal stretch at 1–24 (MQCIRCPAILALLALVLCGPSVSS) is a signal peptide. Pyrrolidone carboxylic acid is present on Gln25. Residues 25-97 (QLDREQSDNQ…ATGGRMNLER (73 aa)) constitute a propeptide that is removed on maturation. The interval 82–107 (AEDASMATGGRMNLERSVDSTNNLPP) is disordered. Cys114 and Cys125 are disulfide-bonded. Lys120 carries the 5-hydroxylysine modification.

The protein belongs to the somatostatin family.

The protein resides in the secreted. In terms of biological role, somatostatin inhibits the release of somatotropin. The chain is Somatostatin-2 (sst2) from Lophius americanus (American angler).